A 361-amino-acid polypeptide reads, in one-letter code: Core-capsid bridging protein (361 aa).

Residues 311 to 321 are compositionally biased toward basic residues; that stretch reads RRRRVARRSKS. A disordered region spans residues 311–331; sequence RRRRVARRSKSTGRFVAAPRK.

This sequence belongs to the adenoviridae core-capsid bridging protein family. In terms of assembly, monomer. Homodimer. Exists in equilibrium between monomers and dimers in solution. Interacts with the histone-like nucleoprotein; this interactions bridge the virus core to the capsid. Interacts with core protein X; this interactions bridge the virus core to the capsid. Interacts with the endosome lysis protein VI; this interactions bridge the virus core to the capsid. Interacts with the peripentonal hexons. Interacts with host NPM1; this interaction might play a role in virus assembly.

The protein localises to the virion. The protein resides in the host nucleus. It localises to the host nucleolus. Its function is as follows. Associates loosely with the viral DNA to form an outer shell around the nucleoprotein-DNA complex and links it with the capsid by binding the endosome lysis protein. Dissociates from the viral genome during entry. Might be involved in nuclear capsid assembly of the viral particles through its association with NPM1/nucleophosmin. In Bovine adenovirus 2 (BAdV-2), this protein is Core-capsid bridging protein.